We begin with the raw amino-acid sequence, 405 residues long: Dematin (405 aa).

Disordered stretches follow at residues 1-30 (MERL…PSSI), 79-158 (PRSR…GSPQ), 173-192 (FPAA…TDYW), and 203-332 (TEWR…DRGN). The span at 11–29 (SPGSVSPSRDSSVPGSPSS) shows a compositional bias: low complexity. 9 positions are modified to phosphoserine: S16, S18, S26, S92, S96, S105, S110, S113, and S156. Residues 108-123 (IISQASAPRTTGTPRT) are compositionally biased toward polar residues. A compositionally biased stretch (acidic residues) spans 216 to 227 (EEEEEEEDDDSG). The interaction with RASGRF2 stretch occupies residues 224–308 (DDSGEEMKAL…SRLQSTEFSP (85 aa)). Residue S226 is modified to Phosphoserine. Composition is skewed to basic and acidic residues over residues 228–242 (EEMK…EELS) and 252–261 (ILKEEMEKSL). S269, S279, S289, S303, S315, S333, S372, and S383 each carry phosphoserine. Polar residues predominate over residues 276-322 (FHTSLHQGTSKSSSLPAYGRTTLSRLQSTEFSPSGSETGSPGLQNGE). In terms of domain architecture, HP spans 337 to 405 (VLEQKIYPYE…NELKKKASLF (69 aa)). S403 is modified (phosphoserine; by PKA).

The protein belongs to the villin/gelsolin family. As to quaternary structure, monomeric (isoform 2); under reducing conditions. Self-associates. Exists under oxidizing condition as a trimer of two isoforms 2 and isoform 1 linked by disulfide bonds. Found in a complex with DMTN, F-actin and spectrin. Found in a complex with ADD2, DMTN and SLC2A1. Interacts with F-actin, ITPKB, RASGRF2 and spectrin. Isoform 2 interacts with SLC2A1 (via C-terminus cytoplasmic region). Isoform 1 and isoform 2 interact (phosphorylated form) with plasmodium berghei 14-3-3 protein; the interaction occurs in a PKA-dependent manner. Phosphorylated. Phosphorylation at Ser-403 by PKA causes the C-terminal headpiece domain to associate with the N-terminal core domain, and leads to the inhibition of its actin bundling activity. In terms of processing, the N-terminus is blocked. In terms of tissue distribution, expressed in platelets (at protein level). Expressed in heart, brain, lung, skeletal muscle, and kidney.

Its subcellular location is the cytoplasm. The protein localises to the cytosol. It is found in the perinuclear region. It localises to the cytoskeleton. The protein resides in the cell membrane. Its subcellular location is the membrane. The protein localises to the endomembrane system. It is found in the cell projection. Membrane-cytoskeleton-associated protein with F-actin-binding activity that induces F-actin bundles formation and stabilization. Its F-actin-bundling activity is reversibly regulated upon its phosphorylation by the cAMP-dependent protein kinase A (PKA). Binds to the erythrocyte membrane glucose transporter-1 SLC2A1/GLUT1, and hence stabilizes and attaches the spectrin-actin network to the erythrocytic plasma membrane. Plays a role in maintaining the functional integrity of PKA-activated erythrocyte shape and the membrane mechanical properties. Also plays a role as a modulator of actin dynamics in fibroblasts; acts as a negative regulator of the RhoA activation pathway. In platelets, functions as a regulator of internal calcium mobilization across the dense tubular system that affects platelet granule secretion pathways and aggregation. Also required for the formation of a diverse set of cell protrusions, such as filopodia and lamellipodia, necessary for platelet cell spreading, motility and migration. Acts as a tumor suppressor and inhibits malignant cell transformation. This Homo sapiens (Human) protein is Dematin (DMTN).